A 164-amino-acid polypeptide reads, in one-letter code: UPF0304 protein YfbU (164 aa).

The protein belongs to the UPF0304 family.

The chain is UPF0304 protein YfbU from Shigella flexneri serotype 5b (strain 8401).